A 344-amino-acid chain; its full sequence is uncharacterized protein (344 aa).

Over residues 323–332 the composition is skewed to basic and acidic residues; that stretch reads KQQEQREQGR. The interval 323 to 344 is disordered; the sequence is KQQEQREQGRRAAYLQQRGMER.

This is an uncharacterized protein from Bacillus anthracis.